The primary structure comprises 485 residues: Efflux pump bik6 (485 aa).

6 helical membrane-spanning segments follow: residues Val42–Tyr62, Leu86–Gly106, Lys108–Ala128, Phe139–Ile159, Tyr172–Ala192, and Trp199–Leu219. Asn241 carries an N-linked (GlcNAc...) asparagine glycan. Transmembrane regions (helical) follow at residues Met269–Leu289, Trp306–Ala326, Leu353–Thr373, Ser379–Phe399, Ala417–Trp437, and Trp447–Phe467.

Belongs to the major facilitator superfamily.

The protein localises to the membrane. Its function is as follows. Efflux pump; part of the gene cluster that mediates the biosynthesis of bikaverin, a red pigment also considered as a mycotoxin. This is Efflux pump bik6 from Gibberella fujikuroi (strain CBS 195.34 / IMI 58289 / NRRL A-6831) (Bakanae and foot rot disease fungus).